We begin with the raw amino-acid sequence, 483 residues long: Protein PLASTID TRANSCRIPTIONALLY ACTIVE 14 (483 aa).

The N-terminal 62 residues, 1 to 62 (MASSVSLQFL…TQPFPLFQSP (62 aa)), are a transit peptide targeting the chloroplast. The SET domain occupies 80 to 325 (YKIGYVRSVR…KGEEMTINYM (246 aa)). S-adenosyl-L-methionine is bound at residue Tyr-324.

It belongs to the class V-like SAM-binding methyltransferase superfamily. In terms of assembly, component of the transcriptionally active chromosome (TAC) complexes. Interacts with PTAC12/HMR/PAP5 and PTAC7. Binds to SL1/MTERF3. Mostly expressed in leaves, flowers and seedlings, and, to a lower extent, in stems and roots.

It localises to the plastid. Its subcellular location is the chloroplast thylakoid. In terms of biological role, essential for chloroplast development, especially for thylakoid formation. Involved in plastid gene expression, probably by maintaining plastid-encoded RNA polymerase (PEP) activity. This chain is Protein PLASTID TRANSCRIPTIONALLY ACTIVE 14, found in Arabidopsis thaliana (Mouse-ear cress).